The following is a 320-amino-acid chain: Ribosomal RNA large subunit methyltransferase F (320 aa).

The disordered stretch occupies residues M1–N20.

This sequence belongs to the methyltransferase superfamily. METTL16/RlmF family.

It is found in the cytoplasm. It carries out the reaction adenosine(1618) in 23S rRNA + S-adenosyl-L-methionine = N(6)-methyladenosine(1618) in 23S rRNA + S-adenosyl-L-homocysteine + H(+). Its function is as follows. Specifically methylates the adenine in position 1618 of 23S rRNA. The sequence is that of Ribosomal RNA large subunit methyltransferase F from Saccharophagus degradans (strain 2-40 / ATCC 43961 / DSM 17024).